Consider the following 494-residue polypeptide: Catalase A (494 aa).

A compositionally biased stretch (polar residues) spans 1–23; the sequence is MTDRPTITTTAGAPVPDNQNSLT. Positions 1 to 25 are disordered; sequence MTDRPTITTTAGAPVPDNQNSLTAG. Active-site residues include H55 and N127. Y337 is a heme binding site.

The protein belongs to the catalase family. Heme serves as cofactor.

It is found in the periplasm. It carries out the reaction 2 H2O2 = O2 + 2 H2O. Its function is as follows. Decomposes hydrogen peroxide into water and oxygen; serves to protect cells from the toxic effects of hydrogen peroxide. In Rhizobium meliloti (strain 1021) (Ensifer meliloti), this protein is Catalase A (katA).